The primary structure comprises 349 residues: Twinfilin-2-B (349 aa).

2 ADF-H domains span residues 4 to 139 and 177 to 313; these read QTGI…KHVS and GLSF…DEVH. The disordered stretch occupies residues 321 to 349; that stretch reads QAFAKPKGPAGKRGQKRLIKGPGENGEDS.

This sequence belongs to the actin-binding proteins ADF family. Twinfilin subfamily. Interacts with G-actin; ADP-actin form and capping protein (CP).

The protein resides in the cytoplasm. Its subcellular location is the cytoskeleton. It is found in the perinuclear region. Its function is as follows. Actin-binding protein involved in motile and morphological processes. Inhibits actin polymerization, likely by sequestering G-actin. The polypeptide is Twinfilin-2-B (twf2-b) (Xenopus laevis (African clawed frog)).